The following is a 22-amino-acid chain: Large ribosomal subunit protein bL32 (22 aa).

The segment at 1 to 22 (CVQQNKKSRSARDMXXSXDALE) is disordered. Positions 13–22 (DMXXSXDALE) are enriched in low complexity.

The protein belongs to the bacterial ribosomal protein bL32 family.

The polypeptide is Large ribosomal subunit protein bL32 (rpmF) (Ectopseudomonas mendocina (Pseudomonas mendocina)).